The chain runs to 142 residues: Large ribosomal subunit protein uL13 (142 aa).

This sequence belongs to the universal ribosomal protein uL13 family. In terms of assembly, part of the 50S ribosomal subunit.

This protein is one of the early assembly proteins of the 50S ribosomal subunit, although it is not seen to bind rRNA by itself. It is important during the early stages of 50S assembly. This Pasteurella multocida (strain Pm70) protein is Large ribosomal subunit protein uL13.